The primary structure comprises 249 residues: Triosephosphate isomerase (249 aa).

2 residues coordinate substrate: N12 and K14. K14 carries the N6-acetyllysine modification. At Y68 the chain carries 3'-nitrotyrosine. S80 is modified (phosphoserine). The active-site Electrophile is H96. Residue S106 is modified to Phosphoserine. K142 is covalently cross-linked (Glycyl lysine isopeptide (Lys-Gly) (interchain with G-Cter in SUMO1)). K149 carries the post-translational modification N6-succinyllysine. At K156 the chain carries N6-acetyllysine; alternate. N6-succinyllysine; alternate is present on K156. The Proton acceptor role is filled by E166. T173 carries the phosphothreonine modification. Residue K194 is modified to N6-acetyllysine; alternate. Residue K194 is modified to N6-succinyllysine; alternate. K194 is subject to N6-methyllysine; alternate. At S198 the chain carries Phosphoserine. Y209 bears the 3'-nitrotyrosine mark. A Phosphoserine modification is found at S212. Position 214 is a phosphothreonine (T214). A Phosphoserine modification is found at S223. K238 bears the N6-acetyllysine mark.

This sequence belongs to the triosephosphate isomerase family. As to quaternary structure, homodimer.

It localises to the cytoplasm. The catalysed reaction is dihydroxyacetone phosphate = methylglyoxal + phosphate. The enzyme catalyses D-glyceraldehyde 3-phosphate = dihydroxyacetone phosphate. The protein operates within carbohydrate degradation; glycolysis; D-glyceraldehyde 3-phosphate from glycerone phosphate: step 1/1. Its pathway is carbohydrate biosynthesis; gluconeogenesis. Its function is as follows. Triosephosphate isomerase is an extremely efficient metabolic enzyme that catalyzes the interconversion between dihydroxyacetone phosphate (DHAP) and D-glyceraldehyde-3-phosphate (G3P) in glycolysis and gluconeogenesis. It is also responsible for the non-negligible production of methylglyoxal a reactive cytotoxic side-product that modifies and can alter proteins, DNA and lipids. This chain is Triosephosphate isomerase (Tpi1), found in Rattus norvegicus (Rat).